The following is a 298-amino-acid chain: Acetylglutamate kinase (298 aa).

Substrate-binding positions include 69–70 (GG), arginine 91, and asparagine 196.

It belongs to the acetylglutamate kinase family. ArgB subfamily.

It is found in the cytoplasm. The enzyme catalyses N-acetyl-L-glutamate + ATP = N-acetyl-L-glutamyl 5-phosphate + ADP. The protein operates within amino-acid biosynthesis; L-arginine biosynthesis; N(2)-acetyl-L-ornithine from L-glutamate: step 2/4. Its function is as follows. Catalyzes the ATP-dependent phosphorylation of N-acetyl-L-glutamate. This Rhodopseudomonas palustris (strain BisB5) protein is Acetylglutamate kinase.